The chain runs to 547 residues: Chaperonin GroEL (547 aa).

ATP contacts are provided by residues 30 to 33, Lys-51, 87 to 91, Gly-415, 479 to 481, and Asp-495; these read TLGP, DGTTT, and NAA. The interval 524 to 547 is disordered; it reads APKKDEPTPPAAGGGMGGMGGMDF. Over residues 535–547 the composition is skewed to gly residues; the sequence is AGGGMGGMGGMDF.

It belongs to the chaperonin (HSP60) family. Forms a cylinder of 14 subunits composed of two heptameric rings stacked back-to-back. Interacts with the co-chaperonin GroES.

Its subcellular location is the cytoplasm. The catalysed reaction is ATP + H2O + a folded polypeptide = ADP + phosphate + an unfolded polypeptide.. Together with its co-chaperonin GroES, plays an essential role in assisting protein folding. The GroEL-GroES system forms a nano-cage that allows encapsulation of the non-native substrate proteins and provides a physical environment optimized to promote and accelerate protein folding. The sequence is that of Chaperonin GroEL from Xylella fastidiosa (strain M23).